Consider the following 737-residue polypeptide: Methylcrotonoyl-CoA carboxylase subunit alpha, mitochondrial (737 aa).

The N-terminal 33 residues, 1 to 33, are a transit peptide targeting the mitochondrion; sequence MASRLLLLPRRRSRHGGASLLLARLLSSSSSEA. A Biotin carboxylation domain is found at 38 to 485; the sequence is AVEKVLVANR…DTHFIERYQN (448 aa). ATP contacts are provided by residues Lys153, 185-246, Glu237, and His272; that span reads ANKI…PRHI. The 199-residue stretch at 157 to 355 folds into the ATP-grasp domain; it reads KRIMGAAGVP…LVEWQIRIAN (199 aa). The Mn(2+) site is built by Glu312, Glu326, and Asn328. Arg330 is an active-site residue. The interval 636 to 665 is disordered; the sequence is YRQTLRAEQSPDDSSQPSASSEARSHPKGS. The span at 647–657 shows a compositional bias: low complexity; that stretch reads DDSSQPSASSE. Residues 656 to 732 form the Biotinyl-binding domain; sequence SEARSHPKGS…FDSSVLFTVK (77 aa). Lys698 is subject to N6-biotinyllysine.

As to quaternary structure, probably a heterodimer composed of biotin-containing alpha subunits and beta subunits. Biotin is required as a cofactor. Requires Mn(2+) as cofactor.

It is found in the mitochondrion matrix. The enzyme catalyses 3-methylbut-2-enoyl-CoA + hydrogencarbonate + ATP = 3-methyl-(2E)-glutaconyl-CoA + ADP + phosphate + H(+). It functions in the pathway amino-acid degradation; L-leucine degradation; (S)-3-hydroxy-3-methylglutaryl-CoA from 3-isovaleryl-CoA: step 2/3. Its function is as follows. Biotin-attachment subunit of the 3-methylcrotonyl-CoA carboxylase, an enzyme that catalyzes the conversion of 3-methylcrotonyl-CoA to 3-methylglutaconyl-CoA, a critical step for leucine and isovaleric acid catabolism. The sequence is that of Methylcrotonoyl-CoA carboxylase subunit alpha, mitochondrial (MCCA) from Oryza sativa subsp. japonica (Rice).